A 316-amino-acid polypeptide reads, in one-letter code: ATP synthase gamma chain (316 aa).

Belongs to the ATPase gamma chain family. F-type ATPases have 2 components, CF(1) - the catalytic core - and CF(0) - the membrane proton channel. CF(1) has five subunits: alpha(3), beta(3), gamma(1), delta(1), epsilon(1). CF(0) has three main subunits: a, b and c.

It localises to the cellular thylakoid membrane. Produces ATP from ADP in the presence of a proton gradient across the membrane. The gamma chain is believed to be important in regulating ATPase activity and the flow of protons through the CF(0) complex. This Prochlorococcus marinus (strain MIT 9215) protein is ATP synthase gamma chain.